The primary structure comprises 266 residues: Methionine aminopeptidase (266 aa).

Residue H80 coordinates substrate. Positions 98, 109, and 172 each coordinate a divalent metal cation. H179 is a substrate binding site. Residues E206 and E237 each coordinate a divalent metal cation.

Belongs to the peptidase M24A family. Methionine aminopeptidase type 1 subfamily. Monomer. Requires Co(2+) as cofactor. The cofactor is Zn(2+). Mn(2+) is required as a cofactor. It depends on Fe(2+) as a cofactor.

The catalysed reaction is Release of N-terminal amino acids, preferentially methionine, from peptides and arylamides.. Its function is as follows. Removes the N-terminal methionine from nascent proteins. The N-terminal methionine is often cleaved when the second residue in the primary sequence is small and uncharged (Met-Ala-, Cys, Gly, Pro, Ser, Thr, or Val). Requires deformylation of the N(alpha)-formylated initiator methionine before it can be hydrolyzed. This is Methionine aminopeptidase from Buchnera aphidicola subsp. Baizongia pistaciae (strain Bp).